The following is a 156-amino-acid chain: Ribosomal RNA large subunit methyltransferase H (156 aa).

S-adenosyl-L-methionine-binding positions include leucine 72, glycine 104, and 123–128 (FGKMVW).

Belongs to the RNA methyltransferase RlmH family. In terms of assembly, homodimer.

It is found in the cytoplasm. It catalyses the reaction pseudouridine(1915) in 23S rRNA + S-adenosyl-L-methionine = N(3)-methylpseudouridine(1915) in 23S rRNA + S-adenosyl-L-homocysteine + H(+). Functionally, specifically methylates the pseudouridine at position 1915 (m3Psi1915) in 23S rRNA. The sequence is that of Ribosomal RNA large subunit methyltransferase H from Ruegeria sp. (strain TM1040) (Silicibacter sp.).